A 500-amino-acid polypeptide reads, in one-letter code: Bifunctional protein GlmU (500 aa).

The interval 1 to 242 (MPVQTAVVVL…SAKVAGANDR (242 aa)) is pyrophosphorylase. Residues 10 to 13 (LAAG), Lys24, Gln81, and 86 to 87 (GT) each bind UDP-N-acetyl-alpha-D-glucosamine. Asp112 contributes to the Mg(2+) binding site. Residues Gly151, Glu167, Asn182, and Asn240 each coordinate UDP-N-acetyl-alpha-D-glucosamine. Asn240 is a binding site for Mg(2+). The tract at residues 243–263 (VQLSRLAAELNRRTVENWMRA) is linker. An N-acetyltransferase region spans residues 264-500 (GVTVVDPSTT…KQDLKDGIEQ (237 aa)). UDP-N-acetyl-alpha-D-glucosamine is bound by residues Arg345 and Lys363. Catalysis depends on His375, which acts as the Proton acceptor. Tyr378 and Asn389 together coordinate UDP-N-acetyl-alpha-D-glucosamine. Acetyl-CoA-binding positions include Ala392, 398–399 (NY), Ser417, and Ala435. The interval 459–500 (DGWVQRNRPGTPAAEAASAAGPHHSSDLHETEKQDLKDGIEQ) is disordered. Positions 482 to 500 (HSSDLHETEKQDLKDGIEQ) are enriched in basic and acidic residues.

It in the N-terminal section; belongs to the N-acetylglucosamine-1-phosphate uridyltransferase family. The protein in the C-terminal section; belongs to the transferase hexapeptide repeat family. As to quaternary structure, homotrimer. It depends on Mg(2+) as a cofactor.

Its subcellular location is the cytoplasm. It carries out the reaction alpha-D-glucosamine 1-phosphate + acetyl-CoA = N-acetyl-alpha-D-glucosamine 1-phosphate + CoA + H(+). The catalysed reaction is N-acetyl-alpha-D-glucosamine 1-phosphate + UTP + H(+) = UDP-N-acetyl-alpha-D-glucosamine + diphosphate. Its pathway is nucleotide-sugar biosynthesis; UDP-N-acetyl-alpha-D-glucosamine biosynthesis; N-acetyl-alpha-D-glucosamine 1-phosphate from alpha-D-glucosamine 6-phosphate (route II): step 2/2. It functions in the pathway nucleotide-sugar biosynthesis; UDP-N-acetyl-alpha-D-glucosamine biosynthesis; UDP-N-acetyl-alpha-D-glucosamine from N-acetyl-alpha-D-glucosamine 1-phosphate: step 1/1. It participates in bacterial outer membrane biogenesis; LPS lipid A biosynthesis. Catalyzes the last two sequential reactions in the de novo biosynthetic pathway for UDP-N-acetylglucosamine (UDP-GlcNAc). The C-terminal domain catalyzes the transfer of acetyl group from acetyl coenzyme A to glucosamine-1-phosphate (GlcN-1-P) to produce N-acetylglucosamine-1-phosphate (GlcNAc-1-P), which is converted into UDP-GlcNAc by the transfer of uridine 5-monophosphate (from uridine 5-triphosphate), a reaction catalyzed by the N-terminal domain. The polypeptide is Bifunctional protein GlmU (Rhodococcus opacus (strain B4)).